We begin with the raw amino-acid sequence, 313 residues long: HPr kinase/phosphorylase (313 aa).

Catalysis depends on residues His136 and Lys157. An ATP-binding site is contributed by 151–158 (GDSGIGKS). Ser158 contacts Mg(2+). The Proton acceptor; for phosphorylation activity. Proton donor; for dephosphorylation activity role is filled by Asp175. An important for the catalytic mechanism of both phosphorylation and dephosphorylation region spans residues 199 to 208 (LEIRGLGIIN). Glu200 is a Mg(2+) binding site. The active site involves Arg241. The segment at 262 to 267 (PVRPGR) is important for the catalytic mechanism of dephosphorylation.

The protein belongs to the HPrK/P family. Homohexamer. It depends on Mg(2+) as a cofactor.

The catalysed reaction is [HPr protein]-L-serine + ATP = [HPr protein]-O-phospho-L-serine + ADP + H(+). It catalyses the reaction [HPr protein]-O-phospho-L-serine + phosphate + H(+) = [HPr protein]-L-serine + diphosphate. Catalyzes the ATP- as well as the pyrophosphate-dependent phosphorylation of a specific serine residue in HPr, a phosphocarrier protein of the phosphoenolpyruvate-dependent sugar phosphotransferase system (PTS). HprK/P also catalyzes the pyrophosphate-producing, inorganic phosphate-dependent dephosphorylation (phosphorolysis) of seryl-phosphorylated HPr (P-Ser-HPr). The two antagonistic activities of HprK/P are regulated by several intracellular metabolites, which change their concentration in response to the absence or presence of rapidly metabolisable carbon sources (glucose, fructose, etc.) in the growth medium. Therefore, by controlling the phosphorylation state of HPr, HPrK/P is a sensor enzyme that plays a major role in the regulation of carbon metabolism and sugar transport: it mediates carbon catabolite repression (CCR), and regulates PTS-catalyzed carbohydrate uptake and inducer exclusion. The chain is HPr kinase/phosphorylase from Staphylococcus saprophyticus subsp. saprophyticus (strain ATCC 15305 / DSM 20229 / NCIMB 8711 / NCTC 7292 / S-41).